Here is a 446-residue protein sequence, read N- to C-terminus: N-succinylarginine dihydrolase (446 aa).

Substrate-binding positions include 19 to 28, N110, and 137 to 138; these read AGLSFGNVAS and HR. E174 is an active-site residue. Residue R213 coordinates substrate. H249 is an active-site residue. The substrate site is built by D251 and N364. Catalysis depends on C370, which acts as the Nucleophile.

Belongs to the succinylarginine dihydrolase family. In terms of assembly, homodimer.

It catalyses the reaction N(2)-succinyl-L-arginine + 2 H2O + 2 H(+) = N(2)-succinyl-L-ornithine + 2 NH4(+) + CO2. The protein operates within amino-acid degradation; L-arginine degradation via AST pathway; L-glutamate and succinate from L-arginine: step 2/5. Functionally, catalyzes the hydrolysis of N(2)-succinylarginine into N(2)-succinylornithine, ammonia and CO(2). The sequence is that of N-succinylarginine dihydrolase from Burkholderia multivorans (strain ATCC 17616 / 249).